Here is a 236-residue protein sequence, read N- to C-terminus: uncharacterized protein (236 aa).

The segment at methionine 1–lysine 29 is disordered.

This is an uncharacterized protein from Staphylococcus aureus.